The chain runs to 133 residues: Small ribosomal subunit protein bS16 (133 aa).

Residues 83 to 101 (KRDARSNPKKAEPGKKAQE) are compositionally biased toward basic and acidic residues. The tract at residues 83–102 (KRDARSNPKKAEPGKKAQER) is disordered.

It belongs to the bacterial ribosomal protein bS16 family.

This chain is Small ribosomal subunit protein bS16, found in Mesorhizobium japonicum (strain LMG 29417 / CECT 9101 / MAFF 303099) (Mesorhizobium loti (strain MAFF 303099)).